The primary structure comprises 230 residues: Small ribosomal subunit protein uS3 (230 aa).

The KH type-2 domain maps to 39 to 107 (VRKYLADKLQ…PAQINIAEIR (69 aa)).

Belongs to the universal ribosomal protein uS3 family. As to quaternary structure, part of the 30S ribosomal subunit. Forms a tight complex with proteins S10 and S14.

Binds the lower part of the 30S subunit head. Binds mRNA in the 70S ribosome, positioning it for translation. This is Small ribosomal subunit protein uS3 from Shewanella oneidensis (strain ATCC 700550 / JCM 31522 / CIP 106686 / LMG 19005 / NCIMB 14063 / MR-1).